The primary structure comprises 535 residues: Putative transcription activator BRLF1 homolog (535 aa).

Residues 384-426 form a disordered region; it reads KTNFPLKRKRQSRNIDPNTPRRPRGRPKGSKTKKRPTCSPALF. The segment covering 404-419 has biased composition (basic residues); sequence RRPRGRPKGSKTKKRP.

The protein belongs to the herpesviridae TAF50 family.

In terms of biological role, transcription activation. Regulates the delayed-early 110 kDa promoter. The chain is Putative transcription activator BRLF1 homolog (50) from Saimiriine herpesvirus 2 (strain 11) (SaHV-2).